Consider the following 335-residue polypeptide: MFKPTRVLKSSQPILNSLPHAETVKMAYDLHLPKKTLHQNMNITSDEPIVFVHGIFGSKKSYATDSKLIANGTHSPVYTIDLRNHGETGHAQPFNYDTLVQDIKEFCSTHNLSNIKLVGYSLGAKVSMLAALRLPELVKSAVIIDNAPIKQPYIESYMKQYIKSMLHVDDAKISTTDKDWKRKASEAMKRYMPNATVRKNLLVNLVNKKPEGFESPAIDFENGNIQFLNPIKHMEEMAVKDVSDWPVESTEGLKFDGPVKFIRGLKSPFISPEGFKKINEHFPKNEFYDVNSAHDILDQRPSEYVKVICDFFNLQRYNSAPAHTVLGHKAPEMRV.

The AB hydrolase-1 domain occupies 48-300 (PIVFVHGIFG…NSAHDILDQR (253 aa)). Residues Ser121, Asp145, and His294 each act as charge relay system in the active site.

Belongs to the AB hydrolase superfamily.

It localises to the mitochondrion. It catalyses the reaction ethanol + acetyl-CoA = ethyl acetate + CoA. It carries out the reaction acetyl-CoA + H2O = acetate + CoA + H(+). The enzyme catalyses ethyl acetate + H2O = ethanol + acetate + H(+). Its function is as follows. Alcohol acetyltransferase that catalyzes the synthesis of ethyl acetate from ethanol and acetyl-CoA. Can also function as a thioesterase by hydrolyzing acetyl-CoA in the absence of ethanol, as well as esterase hydrolyzing ethyl acetate. The polypeptide is Ethanol acetyltransferase 1 (EAT1) (Cyberlindnera fabianii (Yeast)).